We begin with the raw amino-acid sequence, 408 residues long: tRNA(Ile)-lysidine synthase (408 aa).

Ser-27–Ser-32 contacts ATP.

The protein belongs to the tRNA(Ile)-lysidine synthase family.

The protein resides in the cytoplasm. The enzyme catalyses cytidine(34) in tRNA(Ile2) + L-lysine + ATP = lysidine(34) in tRNA(Ile2) + AMP + diphosphate + H(+). In terms of biological role, ligates lysine onto the cytidine present at position 34 of the AUA codon-specific tRNA(Ile) that contains the anticodon CAU, in an ATP-dependent manner. Cytidine is converted to lysidine, thus changing the amino acid specificity of the tRNA from methionine to isoleucine. The sequence is that of tRNA(Ile)-lysidine synthase from Caulobacter vibrioides (strain ATCC 19089 / CIP 103742 / CB 15) (Caulobacter crescentus).